A 260-amino-acid polypeptide reads, in one-letter code: Hydroxyacylglutathione hydrolase (260 aa).

Residues His-61, His-63, Asp-65, His-66, His-119, Asp-138, and His-176 each coordinate Zn(2+).

It belongs to the metallo-beta-lactamase superfamily. Glyoxalase II family. Monomer. It depends on Zn(2+) as a cofactor.

It carries out the reaction an S-(2-hydroxyacyl)glutathione + H2O = a 2-hydroxy carboxylate + glutathione + H(+). Its pathway is secondary metabolite metabolism; methylglyoxal degradation; (R)-lactate from methylglyoxal: step 2/2. Its function is as follows. Thiolesterase that catalyzes the hydrolysis of S-D-lactoyl-glutathione to form glutathione and D-lactic acid. This chain is Hydroxyacylglutathione hydrolase, found in Brucella suis (strain ATCC 23445 / NCTC 10510).